The chain runs to 227 residues: Cytochrome c oxidase subunit 2 (227 aa).

At 1-14 (MAYTFQLGLQDATS) the chain is on the mitochondrial intermembrane side. A helical transmembrane segment spans residues 15–45 (PIMEELTNFHDHTLMIVFLISSLVLYVISLM). Residues 46–59 (LTTKLTHTNTMDAQ) lie on the Mitochondrial matrix side of the membrane. A helical transmembrane segment spans residues 60–87 (EVETIWTILPAVILILIALPSLRILYMM). The Mitochondrial intermembrane segment spans residues 88–227 (DEINNPVLTV…HFENWSASMI (140 aa)). Cu cation contacts are provided by H161, C196, E198, C200, H204, and M207. Residue E198 participates in Mg(2+) binding.

Belongs to the cytochrome c oxidase subunit 2 family. In terms of assembly, component of the cytochrome c oxidase (complex IV, CIV), a multisubunit enzyme composed of 14 subunits. The complex is composed of a catalytic core of 3 subunits MT-CO1, MT-CO2 and MT-CO3, encoded in the mitochondrial DNA, and 11 supernumerary subunits COX4I, COX5A, COX5B, COX6A, COX6B, COX6C, COX7A, COX7B, COX7C, COX8 and NDUFA4, which are encoded in the nuclear genome. The complex exists as a monomer or a dimer and forms supercomplexes (SCs) in the inner mitochondrial membrane with NADH-ubiquinone oxidoreductase (complex I, CI) and ubiquinol-cytochrome c oxidoreductase (cytochrome b-c1 complex, complex III, CIII), resulting in different assemblies (supercomplex SCI(1)III(2)IV(1) and megacomplex MCI(2)III(2)IV(2)). Found in a complex with TMEM177, COA6, COX18, COX20, SCO1 and SCO2. Interacts with TMEM177 in a COX20-dependent manner. Interacts with COX20. Interacts with COX16. The cofactor is Cu cation.

It localises to the mitochondrion inner membrane. It catalyses the reaction 4 Fe(II)-[cytochrome c] + O2 + 8 H(+)(in) = 4 Fe(III)-[cytochrome c] + 2 H2O + 4 H(+)(out). In terms of biological role, component of the cytochrome c oxidase, the last enzyme in the mitochondrial electron transport chain which drives oxidative phosphorylation. The respiratory chain contains 3 multisubunit complexes succinate dehydrogenase (complex II, CII), ubiquinol-cytochrome c oxidoreductase (cytochrome b-c1 complex, complex III, CIII) and cytochrome c oxidase (complex IV, CIV), that cooperate to transfer electrons derived from NADH and succinate to molecular oxygen, creating an electrochemical gradient over the inner membrane that drives transmembrane transport and the ATP synthase. Cytochrome c oxidase is the component of the respiratory chain that catalyzes the reduction of oxygen to water. Electrons originating from reduced cytochrome c in the intermembrane space (IMS) are transferred via the dinuclear copper A center (CU(A)) of subunit 2 and heme A of subunit 1 to the active site in subunit 1, a binuclear center (BNC) formed by heme A3 and copper B (CU(B)). The BNC reduces molecular oxygen to 2 water molecules using 4 electrons from cytochrome c in the IMS and 4 protons from the mitochondrial matrix. This is Cytochrome c oxidase subunit 2 (MT-CO2) from Niviventer culturatus (Oldfield white-bellied rat).